The following is a 259-amino-acid chain: Protein unc-50 homolog (259 aa).

Met1 carries the N-acetylmethionine modification. The Cytoplasmic portion of the chain corresponds to Met1–Pro82. A Phosphoserine modification is found at Ser6. The helical transmembrane segment at Ala83–Leu103 threads the bilayer. The Lumenal segment spans residues Asp104 to Leu115. Residues Trp116 to Ile136 form a helical membrane-spanning segment. Residues Ser137–Ala163 lie on the Cytoplasmic side of the membrane. A helical membrane pass occupies residues Phe164–Leu184. Topologically, residues Thr185 to Thr187 are lumenal. Residues Phe188–Val208 form a helical membrane-spanning segment. The Cytoplasmic segment spans residues Thr209–Thr222. Residues Val223 to Gly243 traverse the membrane as a helical segment. The Lumenal portion of the chain corresponds to Trp244–Lys259.

Belongs to the unc-50 family. As to expression, present in periodontal ligament fibroblasts (at protein level).

The protein resides in the nucleus inner membrane. The protein localises to the golgi apparatus membrane. In terms of biological role, involved in the cell surface expression of neuronal nicotinic receptors. Binds RNA. In Homo sapiens (Human), this protein is Protein unc-50 homolog (UNC50).